The following is a 312-amino-acid chain: Nodulation protein D 2 (312 aa).

Residues 6–63 (LDLNLLVALDALMTKRSVTAAARSINLSQPAMSAAIARLRTYFGDDLFTMRGRELIPT) form the HTH lysR-type domain. The H-T-H motif DNA-binding region spans 23–42 (VTAAARSINLSQPAMSAAIA).

This sequence belongs to the LysR transcriptional regulatory family.

Represses the expression of the nodABCIJ-nolO-noeI operon. The protein is Nodulation protein D 2 (nodD2) of Sinorhizobium fredii (strain NBRC 101917 / NGR234).